Here is a 398-residue protein sequence, read N- to C-terminus: Stearoyl-[acyl-carrier-protein] 9-desaturase, chloroplastic (398 aa).

The N-terminal 34 residues, Met-1 to Met-34, are a transit peptide targeting the chloroplast. A disordered region spans residues Ile-46–Ser-66. Residues Glu-140, Glu-178, His-181, Glu-231, Glu-264, and His-267 each contribute to the Fe cation site.

This sequence belongs to the fatty acid desaturase type 2 family. Homodimer. It depends on Fe(2+) as a cofactor.

Its subcellular location is the plastid. The protein localises to the chloroplast. It catalyses the reaction octadecanoyl-[ACP] + 2 reduced [2Fe-2S]-[ferredoxin] + O2 + 2 H(+) = (9Z)-octadecenoyl-[ACP] + 2 oxidized [2Fe-2S]-[ferredoxin] + 2 H2O. It functions in the pathway lipid metabolism; fatty acid metabolism. Functionally, converts stearoyl-ACP to oleoyl-ACP by introduction of a cis double bond between carbons 9 and 10 of the acyl chain. The protein is Stearoyl-[acyl-carrier-protein] 9-desaturase, chloroplastic of Simmondsia chinensis (Jojoba).